A 308-amino-acid chain; its full sequence is Glutaminase 2 (308 aa).

Substrate is bound by residues Ser-66, Asn-117, Glu-161, Asn-168, Tyr-192, Tyr-244, and Val-262.

The protein belongs to the glutaminase family. As to quaternary structure, homotetramer.

It catalyses the reaction L-glutamine + H2O = L-glutamate + NH4(+). The protein is Glutaminase 2 of Shigella flexneri.